The primary structure comprises 296 residues: Protoheme IX farnesyltransferase (296 aa).

Topologically, residues 1–9 (MMFKQYLQV) are cytoplasmic. A helical membrane pass occupies residues 10 to 28 (TKPGIIFGNLISVIGGFLL). Topologically, residues 29–37 (ASKGSIDYP) are periplasmic. Residues 38-56 (LFIYTLVGVSLVVASGCVF) traverse the membrane as a helical segment. Residues 57-78 (NNYIDRDIDRKMERTKNRVLVK) are Cytoplasmic-facing. A helical membrane pass occupies residues 79-97 (GLISPGVSLVYATLLGIAG). Residues 98-107 (FMLLWFGANP) lie on the Periplasmic side of the membrane. A helical membrane pass occupies residues 108-126 (LACWLGVMGFVVYVGVYSL). Residues 127–197 (YMKRHSVYGT…YQAANIPVLP (71 aa)) are Cytoplasmic-facing. A helical membrane pass occupies residues 198–216 (VVKGISVAKNHITLYIIAF). Topologically, residues 217–228 (AVATLMLTLGGY) are periplasmic. A helical transmembrane segment spans residues 229-247 (AGYKYLVVAAAVSVWWLGM). Residues 248-268 (ALRGYKVEDDKVWARKLFGFS) are Cytoplasmic-facing. Residues 269–287 (IIAITALSIMMSVDFMVPN) traverse the membrane as a helical segment. At 288-296 (SQNLLTYVW) the chain is on the periplasmic side.

The protein belongs to the UbiA prenyltransferase family. Protoheme IX farnesyltransferase subfamily.

The protein localises to the cell inner membrane. It catalyses the reaction heme b + (2E,6E)-farnesyl diphosphate + H2O = Fe(II)-heme o + diphosphate. Its pathway is porphyrin-containing compound metabolism; heme O biosynthesis; heme O from protoheme: step 1/1. Converts heme B (protoheme IX) to heme O by substitution of the vinyl group on carbon 2 of heme B porphyrin ring with a hydroxyethyl farnesyl side group. This is Protoheme IX farnesyltransferase from Salmonella typhimurium (strain LT2 / SGSC1412 / ATCC 700720).